The sequence spans 311 residues: tRNA-cytidine(32) 2-sulfurtransferase (311 aa).

The short motif at 47–52 (SGGKDS) is the PP-loop motif element. [4Fe-4S] cluster contacts are provided by Cys-122, Cys-125, and Cys-213.

It belongs to the TtcA family. Homodimer. The cofactor is Mg(2+). It depends on [4Fe-4S] cluster as a cofactor.

The protein localises to the cytoplasm. It catalyses the reaction cytidine(32) in tRNA + S-sulfanyl-L-cysteinyl-[cysteine desulfurase] + AH2 + ATP = 2-thiocytidine(32) in tRNA + L-cysteinyl-[cysteine desulfurase] + A + AMP + diphosphate + H(+). It participates in tRNA modification. In terms of biological role, catalyzes the ATP-dependent 2-thiolation of cytidine in position 32 of tRNA, to form 2-thiocytidine (s(2)C32). The sulfur atoms are provided by the cysteine/cysteine desulfurase (IscS) system. In Salmonella dublin (strain CT_02021853), this protein is tRNA-cytidine(32) 2-sulfurtransferase.